A 304-amino-acid polypeptide reads, in one-letter code: E3 ubiquitin-protein ligase RNF144B (304 aa).

The TRIAD supradomain stretch occupies residues 27-245 (PLVTCKLCLC…YDRGPCRNKL (219 aa)). Cysteine 31, cysteine 34, cysteine 54, cysteine 57, cysteine 122, cysteine 127, cysteine 146, cysteine 149, cysteine 154, cysteine 157, histidine 162, cysteine 167, cysteine 194, and cysteine 197 together coordinate Zn(2+). The segment at 31-81 (CKLCLCEQSLDKMTTLQECRCIFCTACLKQYMQLAIREGCGSPITCPDMVC) adopts an RING-type 1 zinc-finger fold. The segment at 102–167 (QLYQRLKFER…KDAWHAEVSC (66 aa)) adopts an IBR-type zinc-finger fold. Residues 194-223 (CPVCRVYIERNEGCAQMMCKNCKHTFCWYC) form an RING-type 2; atypical zinc finger. Cysteine 207 is an active-site residue. The Zn(2+) site is built by cysteine 212, cysteine 215, cysteine 220, cysteine 223, histidine 235, and cysteine 241. Residues 259 to 279 (VVGILVGLGIIALVTSPLLLL) form a helical membrane-spanning segment.

It belongs to the RBR family. RNF144 subfamily. In terms of assembly, interacts with UBE2L3, UBE2L6 and LCMT2, as well as with BAX. Interacts with TBK1; this interaction inhibits TBK1 phosphorylation and 'Lys-63'-linked polyubiquitination. Post-translationally, auto-ubiquitinated.

The protein resides in the mitochondrion membrane. It localises to the cytoplasm. It catalyses the reaction [E2 ubiquitin-conjugating enzyme]-S-ubiquitinyl-L-cysteine + [acceptor protein]-L-lysine = [E2 ubiquitin-conjugating enzyme]-L-cysteine + [acceptor protein]-N(6)-ubiquitinyl-L-lysine.. It participates in protein modification; protein ubiquitination. Functionally, E3 ubiquitin-protein ligase which accepts ubiquitin from E2 ubiquitin-conjugating enzymes UBE2L3 and UBE2L6 in the form of a thioester and then directly transfers the ubiquitin to targeted substrates such as LCMT2, thereby promoting their degradation. Induces apoptosis via a p53/TP53-dependent but caspase-independent mechanism. Plays a crucial role in maintaining the genomic stability by controlling the degradation of multiple proteins involved in mitotic progression and DNA damage. Regulates epithelial homeostasis by mediating degradation of CDKN1A and isoform 2 of TP63. Plays a regulatory role in innate immunity by negatively regulating IRF3 activation and IFN-beta production. Mechanistically, inhibits TBK1 phosphorylation and 'Lys-63'-linked polyubiquitination independently of its E3 ligase activity. Alternatively, promotes 'Lys-27' and 'Lys-33'-linked ubiquitination of IFIH1/MDA5, promoting selective autophagic degradation of IFIH1/MDA5 to inhibit antiviral response. The chain is E3 ubiquitin-protein ligase RNF144B (RNF144B) from Bos taurus (Bovine).